A 411-amino-acid polypeptide reads, in one-letter code: Serpin A12 (411 aa).

The first 20 residues, 1 to 20 (MNLVLGLGLFLAGLLTVKGL), serve as a signal peptide directing secretion. N-linked (GlcNAc...) asparagine glycans are attached at residues N92 and N267. Residues 364 to 382 (GTEGAAGSGAQTLPMETPR) are reactive center loop.

It belongs to the serpin family. Forms a stable complex with KLK7. Glycosylation slightly decreases affinity for heparin, but otherwise has no significant effect on KLK7 inhibitory activity or thermal stability of the protein. In terms of tissue distribution, expressed in visceral adipose tissues.

The protein localises to the secreted. With respect to regulation, inhibition of KLK7 is enhanced by heparin. Functionally, adipokine that modulates insulin action by specifically inhibiting its target protease KLK7 in white adipose tissues. The polypeptide is Serpin A12 (Serpina12) (Rattus norvegicus (Rat)).